We begin with the raw amino-acid sequence, 209 residues long: Ribosomal RNA large subunit methyltransferase E (209 aa).

Positions 63, 65, 83, 99, and 124 each coordinate S-adenosyl-L-methionine. The active-site Proton acceptor is lysine 164.

The protein belongs to the class I-like SAM-binding methyltransferase superfamily. RNA methyltransferase RlmE family.

Its subcellular location is the cytoplasm. The enzyme catalyses uridine(2552) in 23S rRNA + S-adenosyl-L-methionine = 2'-O-methyluridine(2552) in 23S rRNA + S-adenosyl-L-homocysteine + H(+). Specifically methylates the uridine in position 2552 of 23S rRNA at the 2'-O position of the ribose in the fully assembled 50S ribosomal subunit. The protein is Ribosomal RNA large subunit methyltransferase E of Shewanella halifaxensis (strain HAW-EB4).